Here is a 255-residue protein sequence, read N- to C-terminus: Thiazole synthase (255 aa).

The active-site Schiff-base intermediate with DXP is the Lys-96. 1-deoxy-D-xylulose 5-phosphate-binding positions include Gly-157, 183-184, and 205-206; these read AG and NT.

The protein belongs to the ThiG family. Homotetramer. Forms heterodimers with either ThiH or ThiS.

The protein localises to the cytoplasm. The catalysed reaction is [ThiS sulfur-carrier protein]-C-terminal-Gly-aminoethanethioate + 2-iminoacetate + 1-deoxy-D-xylulose 5-phosphate = [ThiS sulfur-carrier protein]-C-terminal Gly-Gly + 2-[(2R,5Z)-2-carboxy-4-methylthiazol-5(2H)-ylidene]ethyl phosphate + 2 H2O + H(+). Its pathway is cofactor biosynthesis; thiamine diphosphate biosynthesis. Functionally, catalyzes the rearrangement of 1-deoxy-D-xylulose 5-phosphate (DXP) to produce the thiazole phosphate moiety of thiamine. Sulfur is provided by the thiocarboxylate moiety of the carrier protein ThiS. In vitro, sulfur can be provided by H(2)S. The chain is Thiazole synthase from Anoxybacillus flavithermus (strain DSM 21510 / WK1).